Consider the following 407-residue polypeptide: Lysosome-associated membrane glycoprotein 1 (407 aa).

The signal sequence occupies residues 1–21 (MAAPGAPRSLLLLLLAGLAHG). The first lumenal domain stretch occupies residues 22–189 (ASALFVVKDS…SKEETRCTQD (168 aa)). At 22–371 (ASALFVVKDS…VEECMQDGNN (350 aa)) the chain is on the lumenal side. Residues asparagine 32, asparagine 40, asparagine 57, asparagine 72, asparagine 79, asparagine 98, asparagine 102, asparagine 116, asparagine 125, asparagine 145, asparagine 160, and asparagine 178 are each glycosylated (N-linked (GlcNAc...) asparagine). An intrachain disulfide couples cysteine 36 to cysteine 75. An intrachain disulfide couples cysteine 150 to cysteine 186. The segment at 183–206 (ETRCTQDGPSPTTVPPSPSPPLVP) is disordered. The tract at residues 190-219 (GPSPTTVPPSPSPPLVPTNPTVIKYNVTGE) is hinge. A compositionally biased stretch (pro residues) spans 194–206 (TTVPPSPSPPLVP). 9 N-linked (GlcNAc...) asparagine glycosylation sites follow: asparagine 215, asparagine 220, asparagine 233, asparagine 241, asparagine 253, asparagine 283, asparagine 297, asparagine 304, and asparagine 312. The tract at residues 220 to 371 (NGTCLLASMA…VEECMQDGNN (152 aa)) is second lumenal domain. Residues cysteine 223 and cysteine 260 are joined by a disulfide bond. A disulfide bridge links cysteine 328 with cysteine 365. Residues 372 to 395 (MLIPIAVGGALAGLVLIVLIAYLI) traverse the membrane as a helical segment. Topologically, residues 396–407 (GRKRSHAGYQTI) are cytoplasmic.

The protein belongs to the LAMP family. In terms of assembly, interacts with ABCB9; this interaction strongly stabilizes ABCB9 and protects ABCB9 against lysosomal degradation. Interacts with FURIN. Interacts with TMEM175; inhibiting the proton channel activity of TMEM175. In terms of processing, O- and N-glycosylated; some of the N-glycans attached to LAMP-1 are polylactosaminoglycans.

It is found in the lysosome membrane. The protein resides in the endosome membrane. It localises to the late endosome membrane. The protein localises to the cell membrane. Its subcellular location is the cytolytic granule membrane. Its function is as follows. Lysosomal membrane glycoprotein which plays an important role in lysosome biogenesis, lysosomal pH regulation, autophagy and cholesterol homeostasis. Acts as an important regulator of lysosomal lumen pH regulation by acting as a direct inhibitor of the proton channel TMEM175, facilitating lysosomal acidification for optimal hydrolase activity. Also plays an important role in NK-cells cytotoxicity. Mechanistically, participates in cytotoxic granule movement to the cell surface and perforin trafficking to the lytic granule. In addition, protects NK-cells from degranulation-associated damage induced by their own cytotoxic granule content. Presents carbohydrate ligands to selectins. The chain is Lysosome-associated membrane glycoprotein 1 (LAMP1) from Cricetulus griseus (Chinese hamster).